The following is a 142-amino-acid chain: U1 small nuclear ribonucleoprotein C (142 aa).

The Matrin-type zinc-finger motif lies at 4 to 36; that stretch reads YYCDYCDTFLTHDSPSVRKTHNGGRKHKDNVRM.

Belongs to the U1 small nuclear ribonucleoprotein C family. U1 snRNP is composed of the 7 core Sm proteins B/B', D1, D2, D3, E, F and G that assemble in a heptameric protein ring on the Sm site of the small nuclear RNA to form the core snRNP, and at least 3 U1 snRNP-specific proteins U1-70K, U1-A and U1-C. U1-C interacts with U1 snRNA and the 5' splice-site region of the pre-mRNA.

The protein localises to the nucleus. In terms of biological role, component of the spliceosomal U1 snRNP, which is essential for recognition of the pre-mRNA 5' splice-site and the subsequent assembly of the spliceosome. U1-C is directly involved in initial 5' splice-site recognition for both constitutive and regulated alternative splicing. The interaction with the 5' splice-site seems to precede base-pairing between the pre-mRNA and the U1 snRNA. Stimulates commitment or early (E) complex formation by stabilizing the base pairing of the 5' end of the U1 snRNA and the 5' splice-site region. This Caenorhabditis elegans protein is U1 small nuclear ribonucleoprotein C.